The sequence spans 93 residues: DNA-directed RNA polymerase subunit omega (93 aa).

This sequence belongs to the RNA polymerase subunit omega family. In terms of assembly, the RNAP catalytic core consists of 2 alpha, 1 beta, 1 beta' and 1 omega subunit. When a sigma factor is associated with the core the holoenzyme is formed, which can initiate transcription.

The catalysed reaction is RNA(n) + a ribonucleoside 5'-triphosphate = RNA(n+1) + diphosphate. Its function is as follows. Promotes RNA polymerase assembly. Latches the N- and C-terminal regions of the beta' subunit thereby facilitating its interaction with the beta and alpha subunits. The chain is DNA-directed RNA polymerase subunit omega from Shewanella loihica (strain ATCC BAA-1088 / PV-4).